Consider the following 267-residue polypeptide: NH(3)-dependent NAD(+) synthetase (267 aa).

38–45 contacts ATP; sequence GISGGVDS. Aspartate 44 is a binding site for Mg(2+). Residue arginine 123 participates in deamido-NAD(+) binding. Threonine 143 contributes to the ATP binding site. Glutamate 148 is a binding site for Mg(2+). Deamido-NAD(+)-binding residues include lysine 156 and aspartate 163. Positions 172 and 193 each coordinate ATP. 250 to 251 provides a ligand contact to deamido-NAD(+); that stretch reads HK.

The protein belongs to the NAD synthetase family. Homodimer.

The enzyme catalyses deamido-NAD(+) + NH4(+) + ATP = AMP + diphosphate + NAD(+) + H(+). The protein operates within cofactor biosynthesis; NAD(+) biosynthesis; NAD(+) from deamido-NAD(+) (ammonia route): step 1/1. Catalyzes the ATP-dependent amidation of deamido-NAD to form NAD. Uses ammonia as a nitrogen source. This Pyrobaculum aerophilum (strain ATCC 51768 / DSM 7523 / JCM 9630 / CIP 104966 / NBRC 100827 / IM2) protein is NH(3)-dependent NAD(+) synthetase.